We begin with the raw amino-acid sequence, 477 residues long: ETS translocation variant 1 (477 aa).

A Phosphoserine modification is found at S94. Positions 128-179 are disordered; the sequence is PQVGMRPSNPPTPSSTPVSPLHHASPNSTHTPKPDRAFPAHLPPSQSIPDSS. Residues S191 and S216 each carry the phosphoserine; by RPS6KA1 and RPS6KA5 modification. K317 is covalently cross-linked (Glycyl lysine isopeptide (Lys-Gly) (interchain with G-Cter in SUMO2)). Positions 335-415 form a DNA-binding region, ETS; sequence LQLWQFLVAL…AGERYVYKFV (81 aa).

Belongs to the ETS family. Sumoylated. Post-translationally, phosphorylated at Ser-191 and Ser-216 by RPS6KA1 and RPS6KA5; phosphorylation activates transcriptional activity. Very highly expressed in brain, highly expressed in testis, lung and heart, moderately in spleen, small intestine, pancreas and colon, weakly in liver, prostate and thymus, very weakly in skeletal muscle, kidney and ovary and not in placenta and peripheral blood leukocytes.

The protein localises to the nucleus. Its function is as follows. Transcriptional activator that binds to DNA sequences containing the consensus pentanucleotide 5'-CGGA[AT]-3'. Required for olfactory dopaminergic neuron differentiation; may directly activate expression of tyrosine hydroxylase (TH). The chain is ETS translocation variant 1 from Homo sapiens (Human).